Here is a 904-residue protein sequence, read N- to C-terminus: Envelope glycoprotein B (904 aa).

The first 22 residues, 1–22 (MRGGGLICALVVGALVAAVASA), serve as a signal peptide directing secretion. Residues 23-771 (APAAPAAPRA…SGVSSFMSNP (749 aa)) lie on the Virion surface side of the membrane. The segment at 40-83 (VAANGGPASRPPPVPSPATTKARKRKTKKPPKRPEATPPPDANA) is disordered. Positions 60-70 (KARKRKTKKPP) are enriched in basic residues. 2 N-linked (GlcNAc...) asparagine; by host glycosylation sites follow: asparagine 82 and asparagine 136. Cystine bridges form between cysteine 111–cysteine 570, cysteine 128–cysteine 526, cysteine 202–cysteine 266, cysteine 359–cysteine 407, and cysteine 593–cysteine 630. 2 involved in fusion and/or binding to host membrane regions span residues 168-174 (VWFGHRY) and 253-260 (RVEAFHRY). N-linked (GlcNAc...) asparagine; by host glycosylation is found at asparagine 393, asparagine 425, and asparagine 486. A disordered region spans residues 467–490 (QDRKPRNATPAPLREAPSANASVE). The N-linked (GlcNAc...) asparagine; by host glycan is linked to asparagine 671. Hydrophobic membrane proximal region stretches follow at residues 716–769 (IDTV…SFMS) and 728–768 (MFAG…SSFM). Residues 772-792 (FGALAVGLLVLAGLVAAFFAF) traverse the membrane as a helical segment. The Intravirion segment spans residues 793–904 (RYVLQLQRNP…EDEAGDEDEL (112 aa)). Residues 816–835 (TSDPGGVGGEGEEGAEGGGF) are disordered. Residues 849–852 (YMAL) carry the Golgi targeting motif. The disordered stretch occupies residues 883-904 (KRNKARYSPLHNEDEAGDEDEL). The Internalization motif motif lies at 889-892 (YSPL).

Belongs to the herpesviridae glycoprotein B family. Homotrimer; disulfide-linked. Binds to heparan sulfate proteoglycans. Interacts with gH/gL heterodimer.

It localises to the virion membrane. Its subcellular location is the host cell membrane. The protein resides in the host endosome membrane. It is found in the host Golgi apparatus membrane. In terms of biological role, envelope glycoprotein that forms spikes at the surface of virion envelope. Essential for the initial attachment to heparan sulfate moieties of the host cell surface proteoglycans. Involved in fusion of viral and cellular membranes leading to virus entry into the host cell. Following initial binding to its host receptors, membrane fusion is mediated by the fusion machinery composed at least of gB and the heterodimer gH/gL. May be involved in the fusion between the virion envelope and the outer nuclear membrane during virion egress. This Homo sapiens (Human) protein is Envelope glycoprotein B.